The chain runs to 454 residues: NADP-specific glutamate dehydrogenase 1 (454 aa).

Lysine 110 is an active-site residue. Position 174-203 (174-203 (GVLTGKGLNWGGSLIRPEATGYGLVYYTQA)) interacts with NAD(+).

The protein belongs to the Glu/Leu/Phe/Val dehydrogenases family. As to quaternary structure, homohexamer.

It carries out the reaction L-glutamate + NADP(+) + H2O = 2-oxoglutarate + NH4(+) + NADPH + H(+). The sequence is that of NADP-specific glutamate dehydrogenase 1 (GDH1) from Saccharomyces uvarum (strain ATCC 76518 / CBS 7001 / CLIB 283 / NBRC 10550 / MCYC 623 / NCYC 2669 / NRRL Y-11845) (Yeast).